The primary structure comprises 311 residues: Retron Ec78 reverse transcriptase (311 aa).

The 227-residue stretch at 15 to 241 (DSGISAFLVT…HNRHVTGVTI (227 aa)) folds into the Reverse transcriptase domain. Residues D96, D187, and D188 each contribute to the Mg(2+) site.

This sequence belongs to the bacterial reverse transcriptase family.

The enzyme catalyses DNA(n) + a 2'-deoxyribonucleoside 5'-triphosphate = DNA(n+1) + diphosphate. Functionally, reverse transcriptase (RT) component of antiviral defense system retron Ec78, composed of a non-coding RNA (ncRNA), this reverse transcriptase (RT), a probable ATPase and a putative HNH endonuclease. Expression of retron Ec78 confers protection against bacteriophage T5. At multiplicity of infection (MOI) of 0.02 cultures slow growth when infected with T5 but do not collapse, at MOI 2 cultures enter growth stasis. Responsible for synthesis of msDNA-Ec78 (a linear ssDNA with a 5'-terminal phosphate residue). Unlike most known msDNAs the mature product does not have an RNA component. The retron transcript serves as primer and template for the reaction, and codes for the RT. Not mutagenic when cloned in E.coli. It is thought to be synthesized as a branched RNA with a 2',5'-phosphodiester linkage to ssDNA; the linkage is cleaved endonucleolytically by ExoVII (xseA-xseB) leaving the observed mature 5'-ssDNA terminus. Overexpression of the ncRNA and RT, which leads to increased levels of msDNA, is not mutagenic in vivo. As the stem in the msDNA does not have a mismatch it probably does not bind or sequester MutS and/or MutL. The protein is Retron Ec78 reverse transcriptase of Escherichia coli.